A 254-amino-acid chain; its full sequence is Acetylglutamate kinase (254 aa).

Residues 40 to 41 (GG), Arg62, and Asn158 each bind substrate.

The protein belongs to the acetylglutamate kinase family. ArgB subfamily.

The protein resides in the cytoplasm. The enzyme catalyses N-acetyl-L-glutamate + ATP = N-acetyl-L-glutamyl 5-phosphate + ADP. Its pathway is amino-acid biosynthesis; L-arginine biosynthesis; N(2)-acetyl-L-ornithine from L-glutamate: step 2/4. Catalyzes the ATP-dependent phosphorylation of N-acetyl-L-glutamate. The polypeptide is Acetylglutamate kinase (Chloroflexus aggregans (strain MD-66 / DSM 9485)).